Here is a 193-residue protein sequence, read N- to C-terminus: ATP-dependent Clp protease proteolytic subunit 2 (193 aa).

Catalysis depends on S98, which acts as the Nucleophile. The active site involves H123.

The protein belongs to the peptidase S14 family. In terms of assembly, fourteen ClpP subunits assemble into 2 heptameric rings which stack back to back to give a disk-like structure with a central cavity, resembling the structure of eukaryotic proteasomes.

It localises to the cytoplasm. It carries out the reaction Hydrolysis of proteins to small peptides in the presence of ATP and magnesium. alpha-casein is the usual test substrate. In the absence of ATP, only oligopeptides shorter than five residues are hydrolyzed (such as succinyl-Leu-Tyr-|-NHMec, and Leu-Tyr-Leu-|-Tyr-Trp, in which cleavage of the -Tyr-|-Leu- and -Tyr-|-Trp bonds also occurs).. In terms of biological role, cleaves peptides in various proteins in a process that requires ATP hydrolysis. Has a chymotrypsin-like activity. Plays a major role in the degradation of misfolded proteins. This chain is ATP-dependent Clp protease proteolytic subunit 2, found in Bacillus cereus (strain ATCC 14579 / DSM 31 / CCUG 7414 / JCM 2152 / NBRC 15305 / NCIMB 9373 / NCTC 2599 / NRRL B-3711).